We begin with the raw amino-acid sequence, 88 residues long: MKVLFAKTFVKDLKHVPGHIRKRIKLIIEECQNSNSLNDLKLDIKKIKGYHNYYRIRVGNYRIGIEVNGDTIIFRRVLHRKSIYDYFP.

The protein belongs to the RelE toxin family. As to quaternary structure, forms heterodimers with RelB3 and possibly a heterotetramer RelE3-RelB3(2)-RelE3 from 2 heterodimers. The heterotetramer is probably not very stable in solution.

Toxic component of a type II toxin-antitoxin (TA) system. Has RNase activity. Is very toxic upon expression in E.coli. Its toxic activity is probably neutralized by the cognate antitoxin RelB3. The chain is Toxin RelE3 (relE3) from Methanocaldococcus jannaschii (strain ATCC 43067 / DSM 2661 / JAL-1 / JCM 10045 / NBRC 100440) (Methanococcus jannaschii).